The sequence spans 650 residues: p-hydroxybenzoic acid efflux pump subunit AaeB (650 aa).

The next 11 membrane-spanning stretches (helical) occupy residues F7–L27, W32–P52, G61–A81, V87–I107, L115–L135, E148–I168, L365–I385, F402–P422, Q426–I446, Q450–M470, and I478–I498.

The protein belongs to the aromatic acid exporter ArAE (TC 2.A.85) family.

It is found in the cell inner membrane. In terms of biological role, forms an efflux pump with AaeA. Could function as a metabolic relief valve, allowing to eliminate certain compounds when they accumulate to high levels in the cell. This chain is p-hydroxybenzoic acid efflux pump subunit AaeB, found in Pantoea ananatis (strain LMG 20103).